The following is a 393-amino-acid chain: Putative cytochrome P450 143 (393 aa).

Cys-342 provides a ligand contact to heme.

It belongs to the cytochrome P450 family. The cofactor is heme.

This Mycobacterium bovis (strain ATCC BAA-935 / AF2122/97) protein is Putative cytochrome P450 143 (cyp143).